The primary structure comprises 149 residues: Oocyte-expressed protein (149 aa).

A KH; atypical domain is found at 49-110; the sequence is PLVFYLEAWL…RVQNRVKSVL (62 aa).

The protein belongs to the KHDC1 family. In terms of assembly, component of the subcortical maternal complex (SCMC), at least composed of NLRP5, KHDC3, OOEP, and TLE6. Within the complex, interacts with NLRP5, KHDC3 and TLE6. As part of the SCMC interacts with the SCMC-associated protein NLRP4F. The SCMC may facilitate translocation of its components between the nuclear and cytoplasmic compartments. Forms a scaffold complex with KHDC3/FILIA, and interacts with BLM and TRIM25 at DNA replication forks.

It is found in the cytoplasm. The protein resides in the nucleus. In terms of biological role, component of the subcortical maternal complex (SCMC), a multiprotein complex that plays a key role in early embryonic development. The SCMC complex is a structural constituent of cytoplasmic lattices, which consist in fibrous structures found in the cytoplasm of oocytes and preimplantation embryos. They are required to store maternal proteins critical for embryonic development, such as proteins that control epigenetic reprogramming of the preimplantation embryo, and prevent their degradation or activation. As part of the OOEP-KHDC3 scaffold, recruits BLM and TRIM25 to DNA replication forks, thereby promoting the ubiquitination of BLM by TRIM25, enhancing BLM retainment at replication forks and therefore promoting stalled replication fork restart. Positively regulates the homologous recombination-mediated DNA double-strand break (DSB) repair pathway by regulating ATM activation and RAD51 recruitment to DSBs in oocytes. Thereby contributes to oocyte survival and the resumption and completion of meiosis. The sequence is that of Oocyte-expressed protein (OOEP) from Canis lupus familiaris (Dog).